A 1960-amino-acid polypeptide reads, in one-letter code: Exophilin-5 (1960 aa).

One can recognise a RabBD domain in the interval 7–63; that stretch reads GFDFSFLNEEEARKILQVLERNEELRRAEKDRISKLQKTKRDIRWLQGATGEWFEEI. 3 stretches are compositionally biased toward polar residues: residues 325–334, 342–366, and 635–645; these read ASPATGSFTA, DTQN…LSSI, and SQSSSFPDSTA. 5 disordered regions span residues 325–366, 616–645, 672–720, 734–835, and 910–976; these read ASPA…LSSI, TPAS…DSTA, HSTD…TGLP, DFQN…SSNT, and FSRS…KGRV. Positions 673–682 are enriched in low complexity; the sequence is STDSLSLTDT. Residues 692–707 are compositionally biased toward basic and acidic residues; that stretch reads NSEKDMDVSVSKDEQL. Residues S799 and S802 each carry the phosphoserine modification. 2 stretches are compositionally biased toward polar residues: residues 808 to 835 and 910 to 920; these read ESGT…SSNT and FSRSLSDQDPG. The span at 921–932 shows a compositional bias: basic and acidic residues; sequence QEQREEKDKATK. Residues 933 to 945 are compositionally biased toward polar residues; it reads SQDNQLAVNSTDN. Phosphoserine is present on S1027. A disordered region spans residues 1035–1095; it reads QESKGTVASV…PKATKKMTDM (61 aa). Positions 1062-1074 are enriched in polar residues; it reads GKSTSDKPSSPES. 2 positions are modified to phosphoserine: S1083 and S1117. Disordered stretches follow at residues 1291 to 1375, 1389 to 1493, and 1510 to 1759; these read AQVQ…LSRE, PLLH…DSES, and EAQP…EPHL. Positions 1318-1336 are enriched in basic and acidic residues; that stretch reads PESKDVSQLPDRETSKSTL. Residues 1356 to 1365 are compositionally biased toward polar residues; sequence KEISPSNVSK. The segment covering 1392–1403 has biased composition (basic and acidic residues); it reads HQEKGAGKEHTK. 2 stretches are compositionally biased toward polar residues: residues 1470 to 1493 and 1520 to 1533; these read RETS…DSES and SEAS…TNTA. S1493 carries the phosphoserine modification. Composition is skewed to basic and acidic residues over residues 1534–1546 and 1561–1571; these read EMRK…HMLT and TNTDETKDRYS. The span at 1572–1586 shows a compositional bias: basic residues; the sequence is GKHRLAAISKASKRI. The span at 1637 to 1657 shows a compositional bias: polar residues; it reads ESSQMNVDKSETLLQETTVSS. Residues S1724, S1739, S1789, and S1819 each carry the phosphoserine modification. The segment covering 1732–1741 has biased composition (polar residues); that stretch reads TQKSTINSHC. Disordered regions lie at residues 1828–1847 and 1906–1960; these read ESES…STSS and VNSP…ESEL. A compositionally biased stretch (acidic residues) spans 1939 to 1950; sequence WDTDTTTDDEYY. Residues 1951–1960 show a composition bias toward basic and acidic residues; sequence LDEKDKESEL.

As to quaternary structure, interacts with RAB27A.

In terms of biological role, may act as Rab effector protein and play a role in vesicle trafficking. This chain is Exophilin-5, found in Mus musculus (Mouse).